The chain runs to 432 residues: Peptidase B (432 aa).

Mn(2+) contacts are provided by K196 and D201. Residue K208 is part of the active site. Mn(2+) contacts are provided by D219, D278, and E280. The active site involves R282.

The protein belongs to the peptidase M17 family. As to quaternary structure, homohexamer. Requires Mn(2+) as cofactor.

The protein resides in the cytoplasm. It catalyses the reaction Release of an N-terminal amino acid, Xaa, from a peptide or arylamide. Xaa is preferably Glu or Asp but may be other amino acids, including Leu, Met, His, Cys and Gln.. In terms of biological role, probably plays an important role in intracellular peptide degradation. This Yersinia pseudotuberculosis serotype IB (strain PB1/+) protein is Peptidase B.